We begin with the raw amino-acid sequence, 127 residues long: Small ribosomal subunit protein bS6 (127 aa).

The tract at residues 99 to 127 is disordered; it reads PLPAPRVVPGSEPAAAPQEQPAANSEAAS. Over residues 109 to 127 the composition is skewed to low complexity; the sequence is SEPAAAPQEQPAANSEAAS.

This sequence belongs to the bacterial ribosomal protein bS6 family.

Binds together with bS18 to 16S ribosomal RNA. This Parasynechococcus marenigrum (strain WH8102) protein is Small ribosomal subunit protein bS6.